The primary structure comprises 159 residues: Insulin-like peptide 7 (159 aa).

Positions 1–31 (MTRMIIQNSGSWTLCGAVLLFVLPLIPTPEA) are cleaved as a signal peptide. 3 cysteine pairs are disulfide-bonded: cysteine 63-cysteine 136, cysteine 75-cysteine 150, and cysteine 135-cysteine 141. The propeptide at 90-121 (TGNDEAWIKKTTTEPDGSTWLHVNYANMFLRS) is connecting peptide.

It belongs to the insulin family. Heterodimer of a B chain and an A chain linked by two disulfide bonds. In terms of tissue distribution, broadly expressed at a low level throughout the embryo, except the yolk. Expressed at a moderate level in the embryonic midgut. Larval expression is restricted to ten cells of the ventral nerve cord - in four pairs of centrally located cells in the most posterior abdominal segments and in one pair of dorsally located cells in the A1 or A2 segments.

Its subcellular location is the secreted. Its function is as follows. Possible ligand of InR/insulin-like receptor. This is Insulin-like peptide 7 from Drosophila melanogaster (Fruit fly).